A 517-amino-acid polypeptide reads, in one-letter code: General transcription factor IIF subunit 1 (517 aa).

Residue A2 is modified to N-acetylalanine. Position 156 is a phosphothreonine (T156). Residues 178–458 form a disordered region; it reads QQRRLKDQDQ…SGDVQVTEDA (281 aa). Residues 210 to 225 are compositionally biased toward acidic residues; that stretch reads LEDDLEMSSDDSEASG. S217, S218, S221, and S224 each carry phosphoserine. The span at 232–251 shows a compositional bias: basic residues; it reads PKAKKKAPPSKGGRKKKKKK. Composition is skewed to acidic residues over residues 255 to 270 and 303 to 325; these read DEAF…EGQE and EQSE…EEEE. T331 bears the Phosphothreonine mark. A compositionally biased stretch (acidic residues) spans 343-355; sequence EESDSSEESDIDS. Positions 364 to 374 are enriched in basic residues; it reads AKKKTPPKRER. Phosphoserine is present on residues S377, S380, S381, and S385. A compositionally biased stretch (low complexity) spans 377-391; it reads SGGSSRGNSRPGTPS. T389 bears the Phosphothreonine mark. Phosphoserine is present on S391. Polar residues predominate over residues 392–401; it reads TEAGSTSSTL. K407 is subject to N6-acetyllysine. Residues 428 to 452 show a composition bias toward polar residues; it reads GPQSLSGKSTPQPQSGKSTPSSGDV. Residues S431, S433, and S436 each carry the phosphoserine modification. A phosphothreonine mark is found at T437 and T446. S449 is subject to Phosphoserine.

This sequence belongs to the TFIIF alpha subunit family. Heterodimer of an alpha and a beta subunit. Interacts with GTF2F2, CTDP1, TAF6/TAFII80 and URI1. Interacts with GTF2B (via C-terminus and preferentially via acetylated form); this interaction prevents binding of GTF2B to GTF2F2. Part of TBP-based Pol II pre-initiation complex (PIC), in which Pol II core assembles with general transcription factors and other specific initiation factors including GTF2E1, GTF2E2, GTF2F1, GTF2F2, TCEA1, ERCC2, ERCC3, GTF2H2, GTF2H3, GTF2H4, GTF2H5, GTF2A1, GTF2A2, GTF2B and TBP; this large multi-subunit PIC complex mediates DNA unwinding and targets Pol II core to the transcription start site where the first phosphodiester bond forms. Post-translationally, phosphorylated on Ser and other residues by TAF1 and casein kinase II-like kinases.

It is found in the nucleus. In terms of biological role, TFIIF is a general transcription initiation factor that binds to RNA polymerase II and helps to recruit it to the initiation complex in collaboration with TFIIB. It promotes transcription elongation. The sequence is that of General transcription factor IIF subunit 1 (GTF2F1) from Bos taurus (Bovine).